Consider the following 1785-residue polypeptide: Plexin-2 (1785 aa).

The N-terminal stretch at 1–17 is a signal peptide; the sequence is MLPESVFLLLISHFLRA. The Sema domain occupies 18-444; that stretch reads VTQPPFETEG…MPYGIILEEL (427 aa). Residues 18 to 1139 are Extracellular-facing; sequence VTQPPFETEG…SDHALPSRLS (1122 aa). Asn66 carries an N-linked (GlcNAc...) asparagine glycan. 9 disulfides stabilise this stretch: Cys84–Cys91, Cys118–Cys126, Cys247–Cys349, Cys263–Cys300, Cys318–Cys336, Cys447–Cys464, Cys453–Cys487, Cys456–Cys473, and Cys467–Cys479. N-linked (GlcNAc...) asparagine glycosylation is present at Asn249. The PSI 1 domain maps to 446-488; the sequence is TCSHHSSCTECLVSVDPLCQWCHPTQSCTTSARCTSPVTSQCP. N-linked (GlcNAc...) asparagine glycosylation is found at Asn502, Asn536, and Asn572. A disulfide bond links Cys524 and Cys544. One can recognise a PSI 2 domain in the interval 577–617; that stretch reads DCSGYGTCSSCMSSEYNCAWCSGLHKCSNSCGALEKSKACV. N-linked (GlcNAc...) asparagine glycosylation is found at Asn679 and Asn702. The region spanning 707–748 is the PSI 3 domain; sequence SCTNLASDCSSCLALSPSLSCGWCNRQCSHECHESKATAVCD. IPT/TIG domains follow at residues 750–837, 840–924, and 928–1040; these read PRID…LYSF, TSIF…PFEY, and PSIS…LSPF. N-linked (GlcNAc...) asparagine glycans are attached at residues Asn864, Asn886, Asn984, and Asn1016. The chain crosses the membrane as a helical span at residues 1140–1160; it reads LLILGLLLFIVVTLTVMCLVF. Positions 1159-1197 form a coiled coil; sequence VFKRRRQEREKEYRKIQLQMENLENNVRKECKQAFAELQ. Topologically, residues 1161–1785 are cytoplasmic; it reads KRRRQEREKE…HIYSTISDYE (625 aa).

Belongs to the plexin family. As to quaternary structure, interacts with mab-20. Expressed predominantly in the central nervous system from embryonic to adult stages. Expressed in early embryos in ventral neuroblasts. Expressed in neurons and in a subset of posterior lateral and ventral epidermal cells following epidermal enclosure. Present in neurons, muscles and weakly expressed in epidermal cells of the larval tail.

The protein resides in the cell membrane. Functionally, involved as a receptor for mab-20/sema-2a in the formation or stabilization of cell-cell contacts at several stages of epithelial morphogenesis. In early embryonic development, required for proper ventral closure of the epidermis. During male tail morphogenesis, involved in precursor cell sorting and in the formation of distinct sensory rays. Involved in axon guidance of SDQL neurons during neurogenesis. Probably in response to stimulation by mab-20, regulates fln-1-mediated remodeling of the actin cytoskeleton and thus axon guidance and/or fasciculation of DD/VD neurons. In Caenorhabditis elegans, this protein is Plexin-2.